The primary structure comprises 335 residues: PA-phosphatase related-family protein DDB_G0275547 (335 aa).

Transmembrane regions (helical) follow at residues 43 to 63 (VMYL…GILF), 93 to 113 (VLIP…SLIV), 124 to 144 (ILGL…FKCF), 202 to 222 (SITA…FKIF), 226 to 246 (GHIF…LIGI), and 254 to 274 (HTFL…LSCY).

The protein belongs to the PA-phosphatase related phosphoesterase family.

Its subcellular location is the membrane. This chain is PA-phosphatase related-family protein DDB_G0275547, found in Dictyostelium discoideum (Social amoeba).